The chain runs to 309 residues: Olfactory receptor 5B21 (309 aa).

At 1–26 (MENSTEVTEFILLGLTDDPNLQIPLL) the chain is on the extracellular side. N-linked (GlcNAc...) asparagine glycosylation occurs at N3. Residues 27 to 47 (LAFLFIYLITLLGNGGMMVII) traverse the membrane as a helical segment. At 48 to 55 (HSDSHLHT) the chain is on the cytoplasmic side. Residues 56–76 (PMYFFLSNLSLVDLGYSSAVA) form a helical membrane-spanning segment. Topologically, residues 77 to 95 (PKTVAALRSGDKAISYDGC) are extracellular. Cysteines 95 and 177 form a disulfide. The helical transmembrane segment at 96–116 (AAQFFFFVGFATVECYLLASM) threads the bilayer. The Cytoplasmic portion of the chain corresponds to 117 to 137 (AYDRHAAVCRPLHYTTTMTAG). The helical transmembrane segment at 138–158 (VCALLATGSYVSGFLNASIHA) threads the bilayer. Over 159–199 (AGTFRLSFCGSNEINHFFCDIPPLLALSCSDTRISKLVVFV) the chain is Extracellular. The chain crosses the membrane as a helical span at residues 200 to 220 (AGFNVFFTLLVILISYFFICI). Residues 221 to 235 (TIQRMHSAEGQKKVF) are Cytoplasmic-facing. The helical transmembrane segment at 236-256 (STCASHLTALSIFYGTIIFMY) threads the bilayer. The Extracellular portion of the chain corresponds to 257–270 (LQPNSSQSVDTDKI). An N-linked (GlcNAc...) asparagine glycan is attached at N260. Residues 271-291 (ASVFYTVVIPMLNPLIYSLRN) traverse the membrane as a helical segment. The Cytoplasmic portion of the chain corresponds to 292–309 (KEVKSALWKILNKLYPQY).

It belongs to the G-protein coupled receptor 1 family.

Its subcellular location is the cell membrane. In terms of biological role, odorant receptor. This is Olfactory receptor 5B21 from Homo sapiens (Human).